The chain runs to 288 residues: Cell division protein ZipA (288 aa).

Position 1 (M1) is a topological domain, periplasmic. Residues 2-22 (EIGLREWLIVIGIIVIAGILF) form a helical membrane-spanning segment. Residues 23–288 (DGWRRMRGGK…FERRALTQKR (266 aa)) are Cytoplasmic-facing. 2 stretches are compositionally biased toward basic and acidic residues: residues 66–75 (KEPQLDEHDL) and 83–93 (REAREPRESGS). Positions 66-141 (KEPQLDEHDL…AKSSPAVADK (76 aa)) are disordered. Residues 106–117 (GDLNLDLDLDGG) are compositionally biased toward low complexity.

Belongs to the ZipA family. Interacts with FtsZ via their C-terminal domains.

Its subcellular location is the cell inner membrane. Essential cell division protein that stabilizes the FtsZ protofilaments by cross-linking them and that serves as a cytoplasmic membrane anchor for the Z ring. Also required for the recruitment to the septal ring of downstream cell division proteins. The protein is Cell division protein ZipA of Pseudomonas fluorescens (strain Pf0-1).